The sequence spans 318 residues: Probable cell division protein WhiA (318 aa).

Positions 281–314 (SLKELGQMLVPPVGKSGVNHRLRKIEEISKKLKE) form a DNA-binding region, H-T-H motif.

The protein belongs to the WhiA family.

In terms of biological role, involved in cell division and chromosome segregation. This Thermoanaerobacter sp. (strain X514) protein is Probable cell division protein WhiA.